The chain runs to 85 residues: RNA-binding protein KhpA (85 aa).

Residues 32 to 85 (YLEYNLTVNPEDIGRVIGRQGRVASAIRTIVYSVRVSGPKRVRLTIEDGQQKNS) form the KH domain.

This sequence belongs to the KhpA RNA-binding protein family. In terms of assembly, forms a complex with KhpB.

The protein resides in the cytoplasm. A probable RNA chaperone. Forms a complex with KhpB which binds to cellular RNA and controls its expression. Plays a role in peptidoglycan (PG) homeostasis and cell length regulation. In terms of biological role, necessary for correct cell elongation. The chain is RNA-binding protein KhpA from Lactiplantibacillus plantarum (strain ATCC BAA-793 / NCIMB 8826 / WCFS1) (Lactobacillus plantarum).